The chain runs to 311 residues: Ribosomal RNA small subunit methyltransferase H (311 aa).

S-adenosyl-L-methionine-binding positions include 32–34 (AGH), Asp-52, Phe-79, Asp-100, and Gln-107.

The protein belongs to the methyltransferase superfamily. RsmH family.

The protein localises to the cytoplasm. It carries out the reaction cytidine(1402) in 16S rRNA + S-adenosyl-L-methionine = N(4)-methylcytidine(1402) in 16S rRNA + S-adenosyl-L-homocysteine + H(+). Its function is as follows. Specifically methylates the N4 position of cytidine in position 1402 (C1402) of 16S rRNA. The chain is Ribosomal RNA small subunit methyltransferase H from Staphylococcus haemolyticus (strain JCSC1435).